A 269-amino-acid chain; its full sequence is Carbohydrate metabolism regulator TYE7 (269 aa).

The tract at residues glutamine 146–histidine 178 is disordered. Positions threonine 159–lysine 168 are enriched in basic residues. Residues lysine 169–histidine 178 show a composition bias toward basic and acidic residues. A bHLH domain is found at serine 173–leucine 244.

As to quaternary structure, efficient DNA binding requires dimerization with another bHLH protein.

The protein localises to the nucleus. Its function is as follows. Key transcriptional regulator of carbohydrate metabolism. Binds the promoter sequences of the glycolytic genes at the CANNTG motif and activates their expression during growth on either fermentable or non-fermentable carbon sources as well as under hypoxic growth conditions. Complete glycolytic activation by GAL4 and TYE7 is required for full virulence. Involved in biofilm formation and negatively regulates hyphal formation under hypoxia. Also controls the expression of the copper transport protein CTR1. The chain is Carbohydrate metabolism regulator TYE7 (TYE7) from Candida albicans (strain SC5314 / ATCC MYA-2876) (Yeast).